A 293-amino-acid chain; its full sequence is Elongation factor Ts (293 aa).

The tract at residues 80 to 83 (TDFV) is involved in Mg(2+) ion dislocation from EF-Tu.

Belongs to the EF-Ts family.

The protein localises to the cytoplasm. Functionally, associates with the EF-Tu.GDP complex and induces the exchange of GDP to GTP. It remains bound to the aminoacyl-tRNA.EF-Tu.GTP complex up to the GTP hydrolysis stage on the ribosome. This chain is Elongation factor Ts, found in Lacticaseibacillus casei (strain BL23) (Lactobacillus casei).